Here is a 1809-residue protein sequence, read N- to C-terminus: MALSLQPQLLLLLSLLPQEVTSAPTGPQSLDAGLSLLKSFVATLDQAPQRSLSQSRFSAFLANISSSFQLGRMGEGPVGEPPPLQPPALRLHDFLVTLRGSPDWEPMLGLLGDVLALLGQEQTPRDFLVHQAGVLGGLVEALLGALVPGGPPAPTRPPCTRDGPSDCVLAADWLPSLMLLLEGTRWQALVQLQPSVDPTNATGLDGREPAPHFLQGLLGLLTPAGELGSEEALWGGLLRTVGAPLYAAFQEGLLRVTHSLQDEVFSIMGQPEPDASGQCQGGNLQQLLLWGMRNNLSWDARALGFLSGSPPPPPALLHCLSRGVPLPRASQPAAHISPRQRRAISVEALCENHSGPEPPYSISNFSIYLLCQHIKPATPRPPPTTPRPPPTTPQPPPTTTQPIPDTTQPPPVTPRPPPTTPQPPPSTAVICQTAVWYAVSWAPGARGWLQACHDQFPDQFLDMICGNLSFSALSGPSRPLVKQLCAGLLPPPTSCPPGLIPVPLTPEIFWGCFLENETLWAERLCVEDSLQAVPPRNQAWVQHVCRGPTLDATDFPPCRVGPCGERCPDGGSFLLMVCANDTLYEALVPFWAWLAGQCRISRGGNDTCFLEGMLGPLLPSLPPLGPSPLCLAPGPFLLGMLSQLPRCQSSVPALAHPTRLHYLLRLLTFLLGPGTGGAETQGMLGQALLLSSLPDNCSFWDAFRPEGRRSVLRTVGEYLQREEPTPPGLDSSLSLGSGMSKMELLSCFSPVLWDLLQREKSVWALRTLVKAYLRMPPEDLQQLVLSAEMEAAQGFLTLMLRSWAKLKVQPSEEQAMGRLTALLLQRYPRLTSQLFIDMSPLIPFLAVPDLMRFPPSLLANDSVLAAIRDHSSGMKPEQKEALAKRLLAPELFGEVPDWPQELLWAALPLLPHLPLESFLQLSPHQIQALEDSWPVADLGPGHARHVLRSLVNQSMEDGEEQVLRLGSLACFLSPEELQSLVPLSDPMGPVEQGLLECAANGTLSPEGRVAYELLGVLRSSGGTVLSPRELRVWAPLFPQLGLRFLQELSETQLRAMLPALQGASVTPAQAVLLFGRLLPKHDLSLEELCSLHPLLPGLSPQTLQAIPKRVLVGACSCLGPELSRLSACQIAALLQTFRVKDGVKNMGAAGAGSAVCIPGQPTTWPDCLLPLLPLKLLQLDAAALLANRRLYRQLPWSEQQAQFLWKKMQVPTNLSLRNLQALGNLAGGMTCEFLQQISSMVDFLDVVHMLYQLPTGVRESLRACIWTELQRRMTMPEPELTTLGPELSELDTKLLLDLPIQLMDRLSNDSIMLVVEMVQGAPEQLLALTPLHQTALAERALKNLAPKETPISKEVLETLGPLVGFLGIESTRRIPLPILLSHLSQLQGFCLGETFATELGWLLLQEPVLGKPELWSQDEIEQAGRLVFTLSAEAISSIPREALGPETLERLLGKHQSWEQSRVGHLCGESQLAHKKAALVAGIVHPAAEGLQEPVPNCADIRGTFPAAWSATQISEMELSDFEDCLSLFAGDPGLGPEELRAAMGKAKQLWGPPRGFRPEQILQLGRLLIGLGERELQELTLVDWGVLSSLGQIDGWSSMQLRAVVSSFLRQSGRHVSHLDFIYLTALGYTVCGLRPEELQHISSWEFSQAALFLGSLHLPCSEEQLEVLAYLLVLPGGFGPVSNWGPEIFTEIGTIAAGIPDLALSALLRGQIQGLTPLAISVIPAPKFAVVFNPIQLSSLTRGQAVAVTPEQLAYLSPEQRRAVAWAQHEGKEIPEQLGRNSAWGLYDWFQASWALALPVSIFGHLL.

An N-terminal signal peptide occupies residues Met1–Ser22. N-linked (GlcNAc...) asparagine glycans are attached at residues Asn63, Asn200, Asn295, Asn352, and Asn364. Residues Pro376–Ser426 are disordered. Composition is skewed to pro residues over residues Thr378–Thr399 and Thr407–Ser426. 10 N-linked (GlcNAc...) asparagine glycosylation sites follow: Asn467, Asn516, Asn580, Asn605, Asn696, Asn860, Asn952, Asn1000, Asn1213, and Asn1308.

This sequence belongs to the stereocilin family. In terms of tissue distribution, strongly expressed in the inner ear, detected in the testis, and barely detected in the eye. Detected in the six sensory areas of the inner ear by immunofluorescence. Expressed only in the sensory hair cells and associated with the stereocilia, the stiff microvilli forming the structure for mechanoreception of sound stimulation.

It is found in the cell surface. The protein resides in the cell projection. It localises to the kinocilium. Its subcellular location is the stereocilium. Its function is as follows. Essential to the formation of horizontal top connectors between outer hair cell stereocilia. The polypeptide is Stereocilin (Strc) (Mus musculus (Mouse)).